The primary structure comprises 207 residues: Phosphoserine phosphatase (207 aa).

D8 serves as the catalytic Nucleophile. Mg(2+) contacts are provided by D8 and D10. D10 (proton donor) is an active-site residue. Residues E17, R53, S96–G97, and K141 each bind substrate. D164 is a binding site for Mg(2+). N167 lines the substrate pocket.

This sequence belongs to the HAD-like hydrolase superfamily. SerB family. Requires Mg(2+) as cofactor.

The enzyme catalyses O-phospho-L-serine + H2O = L-serine + phosphate. The catalysed reaction is O-phospho-D-serine + H2O = D-serine + phosphate. It functions in the pathway amino-acid biosynthesis; L-serine biosynthesis; L-serine from 3-phospho-D-glycerate: step 3/3. This chain is Phosphoserine phosphatase, found in Campylobacter jejuni subsp. doylei (strain ATCC BAA-1458 / RM4099 / 269.97).